The primary structure comprises 241 residues: MAPK phosphothreonine lyase (241 aa).

The active-site Proton donor is His106. Residue Lys136 is the Proton acceptor of the active site.

This sequence belongs to the phosphothreonine lyase family.

The protein localises to the secreted. Secreted effector that irreversibly inactivates host MAP kinases by catalyzing the dephosphorylation of the phosphothreonine residue in the pT-X-pY motif present in MAPKs, via a beta-elimination reaction leading to a dehydrobutyrine residue. This is MAPK phosphothreonine lyase (spvC) from Salmonella enteritidis.